The sequence spans 291 residues: Lipase (291 aa).

The first 17 residues, 1-17, serve as a signal peptide directing secretion; sequence MRSSLVLFFVSAWTALA. Positions 18–22 are excised as a propeptide; the sequence is SPIRR. Intrachain disulfides connect Cys-44/Cys-290, Cys-58/Cys-63, and Cys-126/Cys-129. The active-site Nucleophile is the Ser-168. Active-site charge relay system residues include Asp-223 and His-280.

Belongs to the AB hydrolase superfamily. Lipase family.

It carries out the reaction a triacylglycerol + H2O = a diacylglycerol + a fatty acid + H(+). The polypeptide is Lipase (LIP) (Thermomyces lanuginosus (Humicola lanuginosa)).